Consider the following 116-residue polypeptide: RutC family protein HI_1627 (116 aa).

This sequence belongs to the RutC family.

The sequence is that of RutC family protein HI_1627 from Haemophilus influenzae (strain ATCC 51907 / DSM 11121 / KW20 / Rd).